Consider the following 625-residue polypeptide: TORTIFOLIA1-like protein 4 (625 aa).

Positions 1 to 34 are disordered; that stretch reads MSVHGRFPASPPISLSPSSSSTSPSSQSPSTPPD. A compositionally biased stretch (low complexity) spans 12–29; the sequence is PISLSPSSSSTSPSSQSP. HEAT repeat units lie at residues 69 to 106, 110 to 147, 149 to 186, 190 to 227, and 230 to 268; these read DSFS…YHGD, PHLA…HVTR, PFAS…AATD, EQLR…AGGA, and KPVL…AEDL. A disordered region spans residues 391 to 466; sequence SVDNKGPHFT…VKNCKDDVEE (76 aa). Composition is skewed to basic and acidic residues over residues 404-413, 420-434, and 455-466; these read KSSEETEEKA, IIKH…EDSK, and DSVKNCKDDVEE. Ser475 bears the Phosphoserine mark. Positions 582–625 are disordered; the sequence is GMRESTDTNNGQRGGSVFQKRSRRDQFQDCMHTTLQKPTTRLST. Over residues 612-625 the composition is skewed to polar residues; that stretch reads MHTTLQKPTTRLST.

The protein is TORTIFOLIA1-like protein 4 of Arabidopsis thaliana (Mouse-ear cress).